Reading from the N-terminus, the 488-residue chain is Ankyrin repeat domain-containing protein 13C (488 aa).

The tract at residues 1-60 (MTGEKIRSVRKERKSGLDLLEPDEEPAATGPAKHRGSKIFSGGNHRISRSSSSPGDPDGA) is disordered. Residues 41-59 (SGGNHRISRSSSSPGDPDG) are compositionally biased toward low complexity. 3 ANK repeats span residues 58–87 (DGAY…IAQK), 90–119 (HGNT…PVKV), and 123–152 (QGWS…QQSR).

It localises to the endoplasmic reticulum membrane. In terms of biological role, acts as a molecular chaperone for G protein-coupled receptors, regulating their biogenesis and exit from the ER. The sequence is that of Ankyrin repeat domain-containing protein 13C (ankrd13c) from Danio rerio (Zebrafish).